The sequence spans 121 residues: Large ribosomal subunit protein uL14 (121 aa).

Belongs to the universal ribosomal protein uL14 family. As to quaternary structure, part of the 50S ribosomal subunit. Forms a cluster with proteins L3 and L19. In the 70S ribosome, L14 and L19 interact and together make contacts with the 16S rRNA in bridges B5 and B8.

Its function is as follows. Binds to 23S rRNA. Forms part of two intersubunit bridges in the 70S ribosome. The chain is Large ribosomal subunit protein uL14 from Parabacteroides distasonis (strain ATCC 8503 / DSM 20701 / CIP 104284 / JCM 5825 / NCTC 11152).